We begin with the raw amino-acid sequence, 104 residues long: L-rhamnose mutarotase (104 aa).

Tyrosine 18 is a binding site for substrate. The active-site Proton donor is the histidine 22. Residues tyrosine 41 and 76–77 (WW) contribute to the substrate site.

It belongs to the rhamnose mutarotase family. As to quaternary structure, homodimer.

The protein localises to the cytoplasm. It catalyses the reaction alpha-L-rhamnose = beta-L-rhamnose. It functions in the pathway carbohydrate metabolism; L-rhamnose metabolism. Involved in the anomeric conversion of L-rhamnose. This Listeria monocytogenes serotype 4b (strain F2365) protein is L-rhamnose mutarotase.